The sequence spans 1016 residues: Kinesin-like protein KIN-14K (1016 aa).

Residues 14-121 (ADRRAEVIEW…CLLVLRESVS (108 aa)) form the Calponin-homology (CH) domain. The tract at residues 123–176 (GLRDGTSKAPLRKKWRVPETGEPLVPGVAQGKTSPGEDKRNGLPDPKSQQKTPI) is disordered. Positions 288-354 (VNGTNEENQM…EVMTSMHEQQ (67 aa)) form a coiled coil. The region spanning 481–808 (NIRVYCRVRP…LKFAERVSGV (328 aa)) is the Kinesin motor domain. ATP is bound at residue 565–572 (GQTGSGKT). Residues 820–852 (KDIKELLEQVASLKDTIVRKDTEIEQLQLMKDK) adopt a coiled-coil conformation. Composition is skewed to polar residues over residues 884–893 (NQQSQLSDPQ) and 990–1004 (KTPN…QLIG). Disordered regions lie at residues 884-912 (NQQS…DITP) and 971-1016 (LTKN…RWQK).

It belongs to the TRAFAC class myosin-kinesin ATPase superfamily. Kinesin family. KIN-14 subfamily.

This chain is Kinesin-like protein KIN-14K, found in Oryza sativa subsp. japonica (Rice).